Consider the following 329-residue polypeptide: MYNLQEITEKARKAIDALQDNSIESLEAIRVEYFGKKGHFTQLMQGLRDVSAEERPAVGAKINEAKQKVQAILNAKKVEWEEIALNERLAQERIDVSLPGRKMELGGLHPVSITINRVVQFFSKLGFTVEIGPEIETDYYNFDALNIPKHHPARADHDTFWFDAERLLRTQTSGVQIRTMEKMCPPIRIMAPGKVYRNDYDQTHTPMFHQIELLYVDKKANFTELKGLLHDFLRAFFEEDLQVRFRPSYFPFTEPSAEVDVMGKNGKWLEVLGCGMVHPNVLRNVGIDPNEYSGFAVGMGVERLTMLRYNVTDLRSFFENDLRFLKQFK.

E254 is a binding site for Mg(2+).

Belongs to the class-II aminoacyl-tRNA synthetase family. Phe-tRNA synthetase alpha subunit type 1 subfamily. As to quaternary structure, tetramer of two alpha and two beta subunits. It depends on Mg(2+) as a cofactor.

The protein localises to the cytoplasm. The catalysed reaction is tRNA(Phe) + L-phenylalanine + ATP = L-phenylalanyl-tRNA(Phe) + AMP + diphosphate + H(+). In Histophilus somni (strain 129Pt) (Haemophilus somnus), this protein is Phenylalanine--tRNA ligase alpha subunit.